A 492-amino-acid polypeptide reads, in one-letter code: Glutamyl-tRNA(Gln) amidotransferase subunit A (492 aa).

Catalysis depends on charge relay system residues lysine 79 and serine 154. The active-site Acyl-ester intermediate is serine 178.

This sequence belongs to the amidase family. GatA subfamily. Heterotrimer of A, B and C subunits.

It carries out the reaction L-glutamyl-tRNA(Gln) + L-glutamine + ATP + H2O = L-glutaminyl-tRNA(Gln) + L-glutamate + ADP + phosphate + H(+). Allows the formation of correctly charged Gln-tRNA(Gln) through the transamidation of misacylated Glu-tRNA(Gln) in organisms which lack glutaminyl-tRNA synthetase. The reaction takes place in the presence of glutamine and ATP through an activated gamma-phospho-Glu-tRNA(Gln). The sequence is that of Glutamyl-tRNA(Gln) amidotransferase subunit A from Acinetobacter baylyi (strain ATCC 33305 / BD413 / ADP1).